A 212-amino-acid chain; its full sequence is Ropporin-1 (212 aa).

An RIIa domain is found at 12-49 (PELPKMLKEFAKAAIRAQPQDLIQWGADYFEALSRGET). Position 56 is a phosphoserine (Ser56). The interval 209–212 (VWLE) is interaction with RHPN1.

Belongs to the ropporin family. As to quaternary structure, homodimer. Interacts with AKAP3. May interact with SPA17. Interacts with RHPN1. Interacts with FSCB; the interaction increases upon spermatozoa capacitation conditions. Interacts with CFAP61. Sumoylated, sumoylation decreases upon spermatozoa capacitation conditions.

Its subcellular location is the cell projection. It is found in the cilium. The protein localises to the flagellum. Its function is as follows. Important for male fertility. With ROPN1L, involved in fibrous sheath integrity and sperm motility, plays a role in PKA-dependent signaling processes required for spermatozoa capacitation. This chain is Ropporin-1 (ROPN1), found in Macaca fascicularis (Crab-eating macaque).